A 312-amino-acid chain; its full sequence is Olfactory receptor 5P4 (312 aa).

Over 1–25 the chain is Extracellular; that stretch reads METENDTMVTEFIILGLTDSATLRA. The N-linked (GlcNAc...) asparagine glycan is linked to asparagine 5. A helical membrane pass occupies residues 26–46; it reads ILFVFFLPVYIVTVVGNISII. The Cytoplasmic portion of the chain corresponds to 47 to 54; the sequence is LLIRSSPQ. A helical membrane pass occupies residues 55 to 75; sequence LHTPMYLFLSHLAFVDIGYST. At 76–99 the chain is on the extracellular side; sequence SVTPIMLISFLREETTIPLAGCAA. Cysteine 97 and cysteine 189 form a disulfide bridge. A helical membrane pass occupies residues 100 to 120; it reads QLGSDVAFGTTECFLLATMAY. Residues 121 to 133 are Cytoplasmic-facing; the sequence is DRYVAICSPLLYS. The chain crosses the membrane as a helical span at residues 134 to 154; it reads TQMSPAICCFLLGASYLGGCM. Residues 155–196 lie on the Extracellular side of the membrane; that stretch reads NASSFTGCFVNLNFCGPNKVNHFFCDLFPLVKLSCGHAYIAE. The helical transmembrane segment at 197–217 threads the bilayer; the sequence is ISPSISSASVLVSTLSTIIVS. Residues 218-237 are Cytoplasmic-facing; it reads YIYILHSILRMRSAEGRNKA. A helical membrane pass occupies residues 238–258; it reads FSTCTSHLTAVTLFYGTVLFV. The Extracellular portion of the chain corresponds to 259-271; sequence YVMPKSSYSADQV. A helical membrane pass occupies residues 272-292; it reads KVASVVYTVVIPMLNPLIYSL. Residues 293 to 312 are Cytoplasmic-facing; sequence RNKEVKEAMKKLMARTHWFP.

This sequence belongs to the G-protein coupled receptor 1 family.

The protein resides in the cell membrane. In terms of biological role, potential odorant receptor. The sequence is that of Olfactory receptor 5P4 from Mus musculus (Mouse).